The following is a 1369-amino-acid chain: Phosphoribosylformylglycinamidine synthase (1369 aa).

Disordered stretches follow at residues 321-352 (HPTAISPFPGASTGAGGEIRDEGATGRGAKPK) and 373-400 (ENARDTAQPAAQRNPGDTAPGPVGKPDR). 330–341 (GASTGAGGEIRD) provides a ligand contact to ATP. A721 is a binding site for ATP. Mg(2+) is bound by residues D722, E761, N765, and D934. S936 lines the ATP pocket. The region spanning 1116–1369 (MAILREQGVN…MFRNARKQMG (254 aa)) is the Glutamine amidotransferase type-1 domain. C1209 serves as the catalytic Nucleophile. Active-site residues include H1330 and E1332.

This sequence in the N-terminal section; belongs to the FGAMS family. Monomer.

It localises to the cytoplasm. It carries out the reaction N(2)-formyl-N(1)-(5-phospho-beta-D-ribosyl)glycinamide + L-glutamine + ATP + H2O = 2-formamido-N(1)-(5-O-phospho-beta-D-ribosyl)acetamidine + L-glutamate + ADP + phosphate + H(+). It participates in purine metabolism; IMP biosynthesis via de novo pathway; 5-amino-1-(5-phospho-D-ribosyl)imidazole from N(2)-formyl-N(1)-(5-phospho-D-ribosyl)glycinamide: step 1/2. Phosphoribosylformylglycinamidine synthase involved in the purines biosynthetic pathway. Catalyzes the ATP-dependent conversion of formylglycinamide ribonucleotide (FGAR) and glutamine to yield formylglycinamidine ribonucleotide (FGAM) and glutamate. The sequence is that of Phosphoribosylformylglycinamidine synthase from Ralstonia nicotianae (strain ATCC BAA-1114 / GMI1000) (Ralstonia solanacearum).